The sequence spans 1002 residues: Eukaryotic translation initiation factor 5B (1002 aa).

2 disordered regions span residues 1–172 (MAKK…GLAA) and 184–402 (EEQE…NKKD). A compositionally biased stretch (acidic residues) spans 13–23 (WDEEFEEDAAQ). The span at 27–37 (ISATPTPNPES) shows a compositional bias: polar residues. The span at 47 to 57 (EASASAEGAEA) shows a compositional bias: low complexity. Basic and acidic residues-rich tracts occupy residues 75–111 (KKVI…EQAA) and 120–154 (QKEK…ESDK). The segment covering 155–172 (PSASAKKPAKKVPAGLAA) has biased composition (low complexity). Basic and acidic residues-rich tracts occupy residues 184-252 (EEQE…ERRR) and 267-276 (AKKDGEENKP). The segment covering 277–287 (KKVVYSKKKKR) has biased composition (basic residues). Basic and acidic residues predominate over residues 297–306 (IKSDSKKDSE). Acidic residues-rich tracts occupy residues 307 to 342 (VVPD…EETQ) and 352 to 370 (DQNQ…EEEE). Over residues 381-398 (STPAATPAATPTPSSASP) the composition is skewed to low complexity. Residues 403–621 (LRSPICCILG…LLELTQKRMS (219 aa)) form the tr-type G domain. Serine 405 bears the Phosphoserine mark. The segment at 412–419 (GHVDTGKT) is G1. Aspartate 415 serves as a coordination point for K(+). Na(+) is bound at residue aspartate 415. Residues 415–420 (DTGKTK), glutamine 431, and 437–439 (GIT) each bind GTP. Threonine 419 lines the Mg(2+) pocket. Glycine 437 lines the K(+) pocket. Glycine 437 serves as a coordination point for Na(+). Positions 437–441 (GITQQ) are G2. Position 439 (threonine 439) interacts with Mg(2+). The tract at residues 476–479 (DTPG) is G3. GTP contacts are provided by residues 530–533 (NKID) and 599–600 (AV). A G4 region spans residues 530-533 (NKID). The tract at residues 598 to 600 (SAV) is G5.

The protein belongs to the TRAFAC class translation factor GTPase superfamily. Classic translation factor GTPase family. IF-2 subfamily. It depends on Na(+) as a cofactor. The cofactor is K(+).

The protein resides in the cytoplasm. The catalysed reaction is GTP + H2O = GDP + phosphate + H(+). Functionally, plays a role in translation initiation. Translational GTPase that catalyzes the joining of the 40S and 60S subunits to form the 80S initiation complex with the initiator methionine-tRNA in the P-site base paired to the start codon. GTP binding and hydrolysis induces conformational changes in the enzyme that renders it active for productive interactions with the ribosome. The release of the enzyme after formation of the initiation complex is a prerequisite to form elongation-competent ribosomes. Stimulates 20S pre-rRNA cleavage to mature 18S rRNA by PIN-domain endonuclease NOB1. The sequence is that of Eukaryotic translation initiation factor 5B from Saccharomyces cerevisiae (strain ATCC 204508 / S288c) (Baker's yeast).